A 451-amino-acid chain; its full sequence is Sensor histidine kinase CssS (451 aa).

Residues 1-9 lie on the Cytoplasmic side of the membrane; the sequence is MKNKPLAFQ. A helical transmembrane segment spans residues 10 to 30; it reads IWVVISGILLAISILLLVLFS. Over 31 to 165 the chain is Extracellular; sequence NTLRDFFTNE…RDDLAYTLFK (135 aa). A helical transmembrane segment spans residues 166-186; sequence QLLFIIAVVILLSWIPAIWLA. The HAMP domain occupies 187–239; the sequence is KYLSRPLVSFEKHVKRISEQDWDDPVKVDRKDEIGKLGHTIEEMRQKLVQKDE. Residues 187 to 451 lie on the Cytoplasmic side of the membrane; the sequence is KYLSRPLVSF…GVTYRIAVPK (265 aa). One can recognise a Histidine kinase domain in the interval 247-451; the sequence is NISHDLKTPV…GVTYRIAVPK (205 aa). His250 carries the phosphohistidine; by autocatalysis modification.

Its subcellular location is the cell membrane. The enzyme catalyses ATP + protein L-histidine = ADP + protein N-phospho-L-histidine.. Its function is as follows. Member of the two-component regulatory system CssS/CssR required to control the cellular response to secretion stress. Required for the transcription of htrA. Could detect misfolded proteins at the membrane-cell wall interface and then activate CssR by phosphorylation. The polypeptide is Sensor histidine kinase CssS (cssS) (Bacillus subtilis (strain 168)).